The chain runs to 149 residues: Protein DOWN-REGULATED IN DIF1 11 (149 aa).

The N-terminal stretch at 1–22 (MEKAILITFLIATTSMVYQTIG) is a signal peptide.

Mostly expressed in embryo sac cells. Restricted to synergid cells, especially in the filiform apparatus of mature female gametophyte, via MYB98-mediated transcription regulation. Also detected at low levels in egg and central cells.

This is Protein DOWN-REGULATED IN DIF1 11 from Arabidopsis thaliana (Mouse-ear cress).